We begin with the raw amino-acid sequence, 754 residues long: Ribonucleoside-diphosphate reductase subunit alpha (754 aa).

Positions 4–93 (INVIKSSGVS…MFALRKHVYG (90 aa)) constitute an ATP-cone domain. Substrate-binding positions include Thr206, 221 to 222 (SC), Gly250, 435 to 439 (NLCCE), and 615 to 619 (PCESS). Cys222 and Cys457 are disulfide-bonded. The active-site Proton acceptor is Asn435. Cys437 functions as the Cysteine radical intermediate in the catalytic mechanism. The active-site Proton acceptor is Glu439. Residues 621–641 (QVSNSTNGYEPPRGPVSVKES) form a disordered region.

Belongs to the ribonucleoside diphosphate reductase large chain family. As to quaternary structure, heterodimer of a large and a small subunit.

It catalyses the reaction a 2'-deoxyribonucleoside 5'-diphosphate + [thioredoxin]-disulfide + H2O = a ribonucleoside 5'-diphosphate + [thioredoxin]-dithiol. Under complex allosteric control mediated by deoxynucleoside triphosphates and ATP binding. The type of nucleotide bound at the specificity site determines substrate preference. It seems probable that ATP makes the enzyme reduce CDP and UDP, dGTP favors ADP reduction and dTTP favors GDP reduction. Provides the precursors necessary for DNA synthesis. Catalyzes the biosynthesis of deoxyribonucleotides from the corresponding ribonucleotides. The protein is Ribonucleoside-diphosphate reductase subunit alpha (NRDA) of Escherichia coli (Bacteriophage T4).